We begin with the raw amino-acid sequence, 559 residues long: Cation/calcium exchanger 2 (559 aa).

The next 13 helical transmembrane spans lie at 10-30 (FGYL…GFFT), 86-106 (GFPI…FYLL), 131-151 (VAGV…ASLV), 167-187 (TVVG…SISL), 203-223 (ICFF…GKIN), 224-244 (FWGA…VVLS), 331-351 (WSKP…SFLW), 362-382 (AGVV…IAGA), 393-413 (WLLP…YISA), 416-436 (LVAL…ILGL), 480-500 (FALG…SIVI), 506-526 (LLES…VLFS), and 531-551 (LGGV…SLRI).

It belongs to the Ca(2+):cation antiporter (CaCA) (TC 2.A.19) family. Cation/calcium exchanger (CCX) subfamily.

It localises to the membrane. Membrane-localized H(+)-dependent K(+) and Na(+) transporter. This Arabidopsis thaliana (Mouse-ear cress) protein is Cation/calcium exchanger 2 (CCX2).